The following is a 20-amino-acid chain: N-acetyl-D-galactosamine-binding lectin subunit B (20 aa).

In terms of assembly, disulfide-linked heterodimer of A and B chains.

Its function is as follows. Gal / GalNAc-specific lectin. Agglutinates both native and trypsin-treated rabbit erythrocytes but not human erythrocytes irrespective of blood group type. This chain is N-acetyl-D-galactosamine-binding lectin subunit B, found in Iris hollandica (Dutch iris).